A 258-amino-acid polypeptide reads, in one-letter code: Granzyme A (258 aa).

The N-terminal stretch at 1-26 is a signal peptide; the sequence is MNIPFPFSFPPAICLLLIPGVFPVSC. A propeptide spans 27–28 (activation peptide); the sequence is EG. A Peptidase S1 domain is found at 29–255; the sequence is IIGGNEVAPH…HLNWIKKTIA (227 aa). A disulfide bridge links C52 with C68. Catalysis depends on charge relay system residues H67 and D112. 3 disulfides stabilise this stretch: C146–C217, C178–C196, and C207–C230. N169 is a glycosylation site (N-linked (GlcNAc...) asparagine). The Charge relay system role is filled by S211.

The protein belongs to the peptidase S1 family. Granzyme subfamily. Homodimer; disulfide-linked. Interacts with APEX1.

The protein resides in the secreted. It is found in the cytoplasmic granule. The enzyme catalyses Hydrolysis of proteins, including fibronectin, type IV collagen and nucleolin. Preferential cleavage: -Arg-|-Xaa-, -Lys-|-Xaa- &gt;&gt; -Phe-|-Xaa- in small molecule substrates.. Abundant protease in the cytosolic granules of cytotoxic T-cells and NK-cells which activates caspase-independent pyroptosis when delivered into the target cell through the immunological synapse. It cleaves after Lys or Arg. Cleaves APEX1 after 'Lys-31' and destroys its oxidative repair activity. Cleaves the nucleosome assembly protein SET after 'Lys-189', which disrupts its nucleosome assembly activity and allows the SET complex to translocate into the nucleus to nick and degrade the DNA. The chain is Granzyme A (GZMA) from Bos taurus (Bovine).